The primary structure comprises 1703 residues: Protein TIC 214 (1703 aa).

6 helical membrane-spanning segments follow: residues 39–61 (YYGF…TFFL), 67–87 (GIIC…SIYC), 90–110 (LYVM…YMFY), 138–158 (LLLD…NPVL), 174–194 (FFLT…INSI), and 220–240 (FSIL…VPLI). 2 disordered regions span residues 615 to 643 (GPRK…KERE) and 1431 to 1494 (TKEP…WKSK). Residues 618–660 (KGKLEDKEKEKEKAAQTQTEVKKEREKEKEERVIKRFQNQSDF) are a coiled coil. The span at 619-643 (GKLEDKEKEKEKAAQTQTEVKKERE) shows a compositional bias: basic and acidic residues.

It belongs to the TIC214 family. As to quaternary structure, part of the Tic complex.

The protein resides in the plastid. Its subcellular location is the chloroplast inner membrane. Its function is as follows. Involved in protein precursor import into chloroplasts. May be part of an intermediate translocation complex acting as a protein-conducting channel at the inner envelope. This chain is Protein TIC 214, found in Psilotum nudum (Whisk fern).